The sequence spans 288 residues: Probable endonuclease 4 (288 aa).

Residues histidine 75, histidine 115, glutamate 153, aspartate 187, histidine 190, histidine 224, aspartate 237, histidine 239, and glutamate 269 each coordinate Zn(2+).

Belongs to the AP endonuclease 2 family. It depends on Zn(2+) as a cofactor.

It carries out the reaction Endonucleolytic cleavage to 5'-phosphooligonucleotide end-products.. Functionally, endonuclease IV plays a role in DNA repair. It cleaves phosphodiester bonds at apurinic or apyrimidinic (AP) sites, generating a 3'-hydroxyl group and a 5'-terminal sugar phosphate. In Chlamydia muridarum (strain MoPn / Nigg), this protein is Probable endonuclease 4.